We begin with the raw amino-acid sequence, 363 residues long: Flagellar P-ring protein (363 aa).

A signal peptide spans Met1–Ala20.

The protein belongs to the FlgI family. The basal body constitutes a major portion of the flagellar organelle and consists of four rings (L,P,S, and M) mounted on a central rod.

It localises to the periplasm. The protein resides in the bacterial flagellum basal body. Its function is as follows. Assembles around the rod to form the L-ring and probably protects the motor/basal body from shearing forces during rotation. The polypeptide is Flagellar P-ring protein (Shewanella woodyi (strain ATCC 51908 / MS32)).